The sequence spans 324 residues: Meiotic recombination protein DLH1 (324 aa).

112–119 serves as a coordination point for ATP; sequence GEFRCGKT. DsDNA is bound at residue Arg214. Positions 214, 217, 220, 226, and 296 each coordinate ssDNA. Arg220 and Arg226 together coordinate dsDNA.

The protein belongs to the RecA family. DMC1 subfamily. Double stacked ring-shaped homooctamer.

It localises to the nucleus. Its function is as follows. Required for meiotic recombination, synaptonemal complex formation and cell cycle progression. The sequence is that of Meiotic recombination protein DLH1 (DLH1) from Candida albicans (Yeast).